The following is a 495-amino-acid chain: uncharacterized protein (495 aa).

The CHY-type zinc-finger motif lies at 389-457; sequence PLPNNGACEH…KDATCPHCGN (69 aa). Zn(2+) contacts are provided by cysteine 396, histidine 398, cysteine 410, cysteine 411, cysteine 417, cysteine 420, histidine 421, histidine 427, cysteine 437, cysteine 440, cysteine 452, and cysteine 455. Positions 473–483 are enriched in basic and acidic residues; the sequence is GMRDRVRMSRK. The interval 473-495 is disordered; the sequence is GMRDRVRMSRKDPRKYKRKHHGN. A compositionally biased stretch (basic residues) spans 484–495; sequence DPRKYKRKHHGN.

It localises to the cytoplasm. This is an uncharacterized protein from Schizosaccharomyces pombe (strain 972 / ATCC 24843) (Fission yeast).